A 429-amino-acid chain; its full sequence is GTPase Obg (429 aa).

Residues 1–158 (MFYDTAKIYV…RWLLLELKLL (158 aa)) form the Obg domain. An OBG-type G domain is found at 159 to 329 (ADVGLVGYPN…LIYRLWEIIS (171 aa)). GTP is bound by residues 165–172 (GYPNAGKS), 190–194 (FTTLT), 212–215 (DIPG), 282–285 (NKMD), and 310–312 (SAL). Serine 172 and threonine 192 together coordinate Mg(2+). Positions 344 to 421 (IKEQPEEGFV…IGKFEFYFVD (78 aa)) constitute an OCT domain.

This sequence belongs to the TRAFAC class OBG-HflX-like GTPase superfamily. OBG GTPase family. In terms of assembly, monomer. The cofactor is Mg(2+).

The protein localises to the cytoplasm. An essential GTPase which binds GTP, GDP and possibly (p)ppGpp with moderate affinity, with high nucleotide exchange rates and a fairly low GTP hydrolysis rate. Plays a role in control of the cell cycle, stress response, ribosome biogenesis and in those bacteria that undergo differentiation, in morphogenesis control. The chain is GTPase Obg from Carboxydothermus hydrogenoformans (strain ATCC BAA-161 / DSM 6008 / Z-2901).